We begin with the raw amino-acid sequence, 260 residues long: Adenosylcobinamide-GDP ribazoletransferase (260 aa).

Transmembrane regions (helical) follow at residues 42–62 (PLAG…ANAI), 64–84 (LPPL…TGAL), 117–137 (FAAL…MAII), 144–164 (YALL…LAFW), 192–212 (GLGL…VALI), 214–234 (ALVL…AKIG), and 240–260 (TLGA…VMAL).

Belongs to the CobS family. The cofactor is Mg(2+).

It is found in the cell inner membrane. It carries out the reaction alpha-ribazole + adenosylcob(III)inamide-GDP = adenosylcob(III)alamin + GMP + H(+). The enzyme catalyses alpha-ribazole 5'-phosphate + adenosylcob(III)inamide-GDP = adenosylcob(III)alamin 5'-phosphate + GMP + H(+). Its pathway is cofactor biosynthesis; adenosylcobalamin biosynthesis; adenosylcobalamin from cob(II)yrinate a,c-diamide: step 7/7. In terms of biological role, joins adenosylcobinamide-GDP and alpha-ribazole to generate adenosylcobalamin (Ado-cobalamin). Also synthesizes adenosylcobalamin 5'-phosphate from adenosylcobinamide-GDP and alpha-ribazole 5'-phosphate. In Brucella melitensis biotype 1 (strain ATCC 23456 / CCUG 17765 / NCTC 10094 / 16M), this protein is Adenosylcobinamide-GDP ribazoletransferase.